We begin with the raw amino-acid sequence, 59 residues long: Large ribosomal subunit protein bL32c (59 aa).

This sequence belongs to the bacterial ribosomal protein bL32 family.

Its subcellular location is the plastid. It is found in the chloroplast. The chain is Large ribosomal subunit protein bL32c from Physcomitrium patens (Spreading-leaved earth moss).